The following is a 106-amino-acid chain: ATP-dependent Clp protease adapter protein ClpS (106 aa).

This sequence belongs to the ClpS family. In terms of assembly, binds to the N-terminal domain of the chaperone ClpA.

Functionally, involved in the modulation of the specificity of the ClpAP-mediated ATP-dependent protein degradation. This chain is ATP-dependent Clp protease adapter protein ClpS, found in Edwardsiella ictaluri (strain 93-146).